The following is a 206-amino-acid chain: Large ribosomal subunit protein uL3 (206 aa).

The protein belongs to the universal ribosomal protein uL3 family. Part of the 50S ribosomal subunit. Forms a cluster with proteins L14 and L19.

In terms of biological role, one of the primary rRNA binding proteins, it binds directly near the 3'-end of the 23S rRNA, where it nucleates assembly of the 50S subunit. This is Large ribosomal subunit protein uL3 from Thermus thermophilus (strain ATCC BAA-163 / DSM 7039 / HB27).